We begin with the raw amino-acid sequence, 218 residues long: Pyridoxine/pyridoxamine 5'-phosphate oxidase (218 aa).

Substrate-binding positions include 14-17 and lysine 72; that span reads RREY. FMN-binding positions include 67–72, 82–83, arginine 88, lysine 89, and glutamine 111; these read RIVLLK and YT. The substrate site is built by tyrosine 129, arginine 133, and serine 137. FMN-binding positions include 146–147 and tryptophan 191; that span reads QS. 197 to 199 contributes to the substrate binding site; the sequence is RLH. Arginine 201 lines the FMN pocket.

Belongs to the pyridoxamine 5'-phosphate oxidase family. In terms of assembly, homodimer. FMN is required as a cofactor.

The enzyme catalyses pyridoxamine 5'-phosphate + O2 + H2O = pyridoxal 5'-phosphate + H2O2 + NH4(+). It catalyses the reaction pyridoxine 5'-phosphate + O2 = pyridoxal 5'-phosphate + H2O2. It functions in the pathway cofactor metabolism; pyridoxal 5'-phosphate salvage; pyridoxal 5'-phosphate from pyridoxamine 5'-phosphate: step 1/1. The protein operates within cofactor metabolism; pyridoxal 5'-phosphate salvage; pyridoxal 5'-phosphate from pyridoxine 5'-phosphate: step 1/1. In terms of biological role, catalyzes the oxidation of either pyridoxine 5'-phosphate (PNP) or pyridoxamine 5'-phosphate (PMP) into pyridoxal 5'-phosphate (PLP). This is Pyridoxine/pyridoxamine 5'-phosphate oxidase from Escherichia coli O45:K1 (strain S88 / ExPEC).